The chain runs to 509 residues: MEEIQRYLQLERSQQHDFLYPLIFQEYIYTFAHDRGFGRSILSENPGYDNKYSLLIVKRLITRMYQQNHLIISPNDSNQNQFLGRNKNLYSQIISEGFAFIVEIPFSLRLISCLEGKNKKIIKSQNLRSILSIFPFLEDNFSHLNLVLDILIPHPVHGEILVQTLRYWVKDASSLHLLRFFLNKNWNSLITPKKASSSFLKRNQRLFLFLYNSHVCEYESVFVFLRNQSSHLRSTPFGVFLERIYFYGKIERLVNVFVKVKDFQANLWLVKEPCIHYIRYQRKAILASKGTSLFMNKWKCYLITFWQWHFSLWFYPRRIYINQLSNHSFEFLGYQSSLRMNPSVVRSQILENSFLINNAIKKVDTFIPIIPLIVSLAKAKFCNVXGHPISKPVRADLSDSNIIDRFGCICRNFSHYHSGSSKKKSLYRIKYILRLSCARTLARKHKTTVRTFLKRLGSELLEEFLLSEEDVLFLTFPKASSSLQGVYRNRIWYLDIISINDLADHKSKL.

The protein belongs to the intron maturase 2 family. MatK subfamily.

Its subcellular location is the plastid. Its function is as follows. Usually encoded in the trnK tRNA gene intron. Probably assists in splicing its own and other chloroplast group II introns. This Castilleja linariifolia (Wyoming Indian paintbrush) protein is Maturase K.